An 873-amino-acid polypeptide reads, in one-letter code: F-box only protein 41 (873 aa).

Residues 85-97 (ESTSFQGKEQATG) show a composition bias toward polar residues. Disordered stretches follow at residues 85–110 (ESTS…HHHH), 163–193 (SSAC…SPAD), and 345–540 (SSSC…PSRS). The segment covering 168–178 (TPPPGPGPGPC) has biased composition (pro residues). The segment covering 179-192 (SGPSSASPASPSPA) has biased composition (low complexity). The stretch at 207–349 (ALEKLEVDRR…QLQVISSSCG (143 aa)) forms a coiled coil. Over residues 357-371 (GRGGGGSASGPGVRG) the composition is skewed to gly residues. Arg358 bears the Omega-N-methylarginine mark. Composition is skewed to polar residues over residues 384-414 (VPST…SSGC) and 442-456 (AQAT…QAPR). Ser476 is modified (phosphoserine). Thr477 is modified (phosphothreonine). The region spanning 548–592 (ILKMRAALFCIFTYLDTRTLLHAAEVCRDWRFVARHPAVWTRVLL) is the F-box domain. Residue Ser760 is modified to Phosphoserine.

Directly interacts with SKP1 and CUL1.

In terms of biological role, substrate-recognition component of the SCF (SKP1-CUL1-F-box protein)-type E3 ubiquitin ligase complex. The protein is F-box only protein 41 (Fbxo41) of Mus musculus (Mouse).